We begin with the raw amino-acid sequence, 248 residues long: Carbohydrate deacetylase (248 aa).

Residues His59 and His121 each coordinate Mg(2+).

The protein belongs to the YdjC deacetylase family. Mg(2+) is required as a cofactor.

Functionally, probably catalyzes the deacetylation of acetylated carbohydrates an important step in the degradation of oligosaccharides. The polypeptide is Carbohydrate deacetylase (Brevibacillus brevis (strain 47 / JCM 6285 / NBRC 100599)).